Here is a 160-residue protein sequence, read N- to C-terminus: Major strawberry allergen Fra a 1.07 (160 aa).

The protein belongs to the BetVI family. Post-translationally, phosphorylated in vivo. Phosphorylation prevents its activity as ribonuclease. Highly expressed in roots. Expressed a low levels in ripe red fruits.

Its function is as follows. Possesses ribonuclease activity in vitro. This is Major strawberry allergen Fra a 1.07 from Fragaria ananassa (Strawberry).